Here is a 379-residue protein sequence, read N- to C-terminus: Queuine tRNA-ribosyltransferase (379 aa).

Asp94 acts as the Proton acceptor in catalysis. Substrate contacts are provided by residues 94-98, Asp148, Gln191, and Gly218; that span reads DSGGF. The interval 249-255 is RNA binding; the sequence is GVGSPDA. Asp268 (nucleophile) is an active-site residue. Residues 273–277 are RNA binding; important for wobble base 34 recognition; sequence TRIAR. Zn(2+) is bound by residues Cys306, Cys308, Cys311, and His337.

The protein belongs to the queuine tRNA-ribosyltransferase family. In terms of assembly, homodimer. Within each dimer, one monomer is responsible for RNA recognition and catalysis, while the other monomer binds to the replacement base PreQ1. Zn(2+) is required as a cofactor.

The catalysed reaction is 7-aminomethyl-7-carbaguanine + guanosine(34) in tRNA = 7-aminomethyl-7-carbaguanosine(34) in tRNA + guanine. It participates in tRNA modification; tRNA-queuosine biosynthesis. Catalyzes the base-exchange of a guanine (G) residue with the queuine precursor 7-aminomethyl-7-deazaguanine (PreQ1) at position 34 (anticodon wobble position) in tRNAs with GU(N) anticodons (tRNA-Asp, -Asn, -His and -Tyr). Catalysis occurs through a double-displacement mechanism. The nucleophile active site attacks the C1' of nucleotide 34 to detach the guanine base from the RNA, forming a covalent enzyme-RNA intermediate. The proton acceptor active site deprotonates the incoming PreQ1, allowing a nucleophilic attack on the C1' of the ribose to form the product. After dissociation, two additional enzymatic reactions on the tRNA convert PreQ1 to queuine (Q), resulting in the hypermodified nucleoside queuosine (7-(((4,5-cis-dihydroxy-2-cyclopenten-1-yl)amino)methyl)-7-deazaguanosine). This chain is Queuine tRNA-ribosyltransferase, found in Staphylococcus aureus (strain Mu3 / ATCC 700698).